Reading from the N-terminus, the 164-residue chain is Rhomboid-related protein 1 (164 aa).

Transmembrane regions (helical) follow at residues 10–30 (GFNA…HGVL), 32–52 (ISLL…ITDM), 56–76 (VVGG…NVVM), and 120–140 (PSFM…LTIL). Catalysis depends on serine 60, which acts as the Nucleophile. The active site involves histidine 125.

This sequence belongs to the peptidase S54 family.

It localises to the membrane. The enzyme catalyses Cleaves type-1 transmembrane domains using a catalytic dyad composed of serine and histidine that are contributed by different transmembrane domains.. In terms of biological role, may be involved in regulated intramembrane proteolysis and the subsequent release of functional polypeptides from their membrane anchors. The sequence is that of Rhomboid-related protein 1 (Rhbdl1) from Rattus norvegicus (Rat).